A 225-amino-acid chain; its full sequence is MNSIEFPLFDRTTQNSVISTTLNDLSNWSRLSSLWPLLYGTSCCFIEFASLIGSRFDFDRYGLVPRSSPRQADLILTAGTVTMKMAPSLVRLYEQMPEPKYVIAMGACTITGGMFSTDSYSTVRGVDKLIPVDVYLPGCPPKPEAIIDAITKLRKKISREIYPDRTMSQRENRCFTTNHKFQVGHSIHTGNYDQGFLYQPTSTSEIPPETFFKYKSSVSSPELVN.

The [4Fe-4S] cluster site is built by Cys43, Cys44, Cys108, and Cys139.

The protein belongs to the complex I 20 kDa subunit family. NDH is composed of at least 16 different subunits, 5 of which are encoded in the nucleus. [4Fe-4S] cluster is required as a cofactor.

It localises to the plastid. It is found in the chloroplast thylakoid membrane. The enzyme catalyses a plastoquinone + NADH + (n+1) H(+)(in) = a plastoquinol + NAD(+) + n H(+)(out). It catalyses the reaction a plastoquinone + NADPH + (n+1) H(+)(in) = a plastoquinol + NADP(+) + n H(+)(out). Its function is as follows. NDH shuttles electrons from NAD(P)H:plastoquinone, via FMN and iron-sulfur (Fe-S) centers, to quinones in the photosynthetic chain and possibly in a chloroplast respiratory chain. The immediate electron acceptor for the enzyme in this species is believed to be plastoquinone. Couples the redox reaction to proton translocation, and thus conserves the redox energy in a proton gradient. The polypeptide is NAD(P)H-quinone oxidoreductase subunit K, chloroplastic (Lactuca sativa (Garden lettuce)).